The sequence spans 539 residues: Chaperonin GroEL (539 aa).

ATP is bound by residues 29-32 (TIGP), 86-90 (DGTTT), G413, 476-478 (NAA), and D492.

This sequence belongs to the chaperonin (HSP60) family. As to quaternary structure, forms a cylinder of 14 subunits composed of two heptameric rings stacked back-to-back. Interacts with the co-chaperonin GroES.

It localises to the cytoplasm. It catalyses the reaction ATP + H2O + a folded polypeptide = ADP + phosphate + an unfolded polypeptide.. In terms of biological role, together with its co-chaperonin GroES, plays an essential role in assisting protein folding. The GroEL-GroES system forms a nano-cage that allows encapsulation of the non-native substrate proteins and provides a physical environment optimized to promote and accelerate protein folding. The protein is Chaperonin GroEL of Staphylococcus epidermidis.